A 94-amino-acid polypeptide reads, in one-letter code: Evasin P1104 (94 aa).

A signal peptide spans 1–28 (MASNLFTIFQLAGFVAIVFIVNLHSVSA). 3 disulfide bridges follow: Cys-48–Cys-66, Cys-52–Cys-68, and Cys-62–Cys-79. Asn-51 is a glycosylation site (N-linked (GlcNAc...) asparagine).

The protein localises to the secreted. Salivary chemokine-binding protein which binds to host chemokines CXCL1, CXCL2, CXCL3, CXCL5, CXCL6, CXCL12 and CXCL13. This is Evasin P1104 from Ixodes ricinus (Common tick).